The sequence spans 204 residues: MQDPAAYYQTMMAKQQQQQQPQFAEQEQLKCPRCDSPNTKFCYYNNYNLSQPRHFCKSCRRYWTKGGALRNVPVGGGSRKNATKRSTSSSSSASSPSNSSQNKKTKNPDPDPDPRNSQKPDLDPTRMLYGFPIGDQDVKGMEIGGSFSSLLANNMQLGLGGGGIMLDGSGWDHPGMGLGLRRTEPGNNNNNPWTDLAMNRAEKN.

The segment at 1 to 25 is disordered; sequence MQDPAAYYQTMMAKQQQQQQPQFAE. The Dof-type zinc-finger motif lies at 29-83; it reads LKCPRCDSPNTKFCYYNNYNLSQPRHFCKSCRRYWTKGGALRNVPVGGGSRKNAT. Zn(2+)-binding residues include cysteine 31, cysteine 34, cysteine 56, and cysteine 59. Disordered regions lie at residues 70 to 128 and 182 to 204; these read RNVP…TRML and RTEPGNNNNNPWTDLAMNRAEKN. Over residues 84–102 the composition is skewed to low complexity; the sequence is KRSTSSSSSASSPSNSSQN. Basic and acidic residues predominate over residues 106 to 124; the sequence is KNPDPDPDPRNSQKPDLDP.

It is found in the nucleus. Functionally, transcription factor that binds specifically to a 5'-AA[AG]G-3' consensus core sequence. The polypeptide is Dof zinc finger protein DOF3.1 (DOF3.1) (Arabidopsis thaliana (Mouse-ear cress)).